The primary structure comprises 560 residues: Cilia- and flagella-associated protein 184 (560 aa).

Residues 1-12 (MEGGSEHTKDPG) are compositionally biased toward basic and acidic residues. A disordered region spans residues 1-209 (MEGGSEHTKD…QEEGKPLGGR (209 aa)). Acidic residues-rich tracts occupy residues 41 to 61 (GELE…EEEA) and 101 to 110 (EPEEPAEAGA). Basic and acidic residues-rich tracts occupy residues 127–144 (AEAR…KEVR) and 179–209 (ETRR…LGGR). Coiled coils occupy residues 357 to 481 (QAAL…QGRD) and 510 to 536 (DSLL…LKRH).

The protein belongs to the CFAP184 family. As to quaternary structure, forms a complex with CFAP263; the interaction is required for functional activity in cilia.

Its subcellular location is the cell projection. The protein resides in the cilium. It is found in the cytoplasm. The protein localises to the cytoskeleton. It localises to the microtubule organizing center. Its subcellular location is the centrosome. In terms of biological role, in complex with CFAP263, acts as a regulator of ciliary beating that connects radial spoke 3 (RS3) to the inner dynein arm (IDA) and the nexin-dynein regulatory complex (N-DRC). The complex is positioned parallel to N-DRC and forms a connection between the arch at the base of RS3, the IDA tail and N-DRC. The protein is Cilia- and flagella-associated protein 184 (CFAP184) of Macaca fascicularis (Crab-eating macaque).